The chain runs to 249 residues: Uridylate kinase (249 aa).

Residue 21–24 (KLSG) coordinates ATP. G63 contacts UMP. ATP-binding residues include G64 and R68. UMP contacts are provided by residues D84 and 145-152 (TGNPFVTT). ATP is bound by residues T172, Y178, and D181.

Belongs to the UMP kinase family. Homohexamer.

It localises to the cytoplasm. The catalysed reaction is UMP + ATP = UDP + ADP. The protein operates within pyrimidine metabolism; CTP biosynthesis via de novo pathway; UDP from UMP (UMPK route): step 1/1. Its activity is regulated as follows. Inhibited by UTP. Its function is as follows. Catalyzes the reversible phosphorylation of UMP to UDP. This chain is Uridylate kinase, found in Francisella tularensis subsp. holarctica (strain FTNF002-00 / FTA).